A 380-amino-acid chain; its full sequence is Cysteine protease ATG4A (380 aa).

The active-site Nucleophile is Cys60. Catalysis depends on residues Asp262 and His264. Positions 375–378 (FEIL) match the LIR motif.

The protein belongs to the peptidase C54 family.

The protein resides in the cytoplasm. It carries out the reaction [protein]-C-terminal L-amino acid-glycyl-phosphatidylethanolamide + H2O = [protein]-C-terminal L-amino acid-glycine + a 1,2-diacyl-sn-glycero-3-phosphoethanolamine. Cysteine protease that plays a key role in autophagy by mediating both proteolytic activation and delipidation of ATG8 family proteins. The protease activity is required for proteolytic activation of ATG8 family proteins: cleaves the C-terminal amino acid of ATG8 proteins to reveal a C-terminal glycine. Exposure of the glycine at the C-terminus is essential for ATG8 proteins conjugation to phosphatidylethanolamine (PE) and insertion to membranes, which is necessary for autophagy. Protease activity is also required to counteract formation of high-molecular weight conjugates of ATG8 proteins (ATG8ylation): acts as a deubiquitinating-like enzyme that removes ATG8 conjugated to other proteins, such as ATG3. In addition to the protease activity, also mediates delipidation of ATG8 family proteins. Catalyzes delipidation of PE-conjugated forms of ATG8 proteins during macroautophagy. The protein is Cysteine protease ATG4A of Gallus gallus (Chicken).